Consider the following 498-residue polypeptide: Galactose-1-phosphate uridylyltransferase (498 aa).

It belongs to the galactose-1-phosphate uridylyltransferase type 2 family.

The protein localises to the cytoplasm. It carries out the reaction alpha-D-galactose 1-phosphate + UDP-alpha-D-glucose = alpha-D-glucose 1-phosphate + UDP-alpha-D-galactose. The protein operates within carbohydrate metabolism; galactose metabolism. In Clostridium perfringens (strain SM101 / Type A), this protein is Galactose-1-phosphate uridylyltransferase.